Consider the following 587-residue polypeptide: Arginine--tRNA ligase (587 aa).

The 'HIGH' region signature appears at 123-133 (ANVAKPLHVGH).

Belongs to the class-I aminoacyl-tRNA synthetase family. As to quaternary structure, monomer.

Its subcellular location is the cytoplasm. It carries out the reaction tRNA(Arg) + L-arginine + ATP = L-arginyl-tRNA(Arg) + AMP + diphosphate. This chain is Arginine--tRNA ligase, found in Alkaliphilus oremlandii (strain OhILAs) (Clostridium oremlandii (strain OhILAs)).